The following is a 185-amino-acid chain: Photosystem I assembly protein Ycf4 (185 aa).

The next 2 helical transmembrane spans lie at 22-42 and 57-77; these read FFFA…GFSS and IIFV…LFFS.

Belongs to the Ycf4 family.

Its subcellular location is the plastid. The protein localises to the chloroplast thylakoid membrane. Functionally, seems to be required for the assembly of the photosystem I complex. In Welwitschia mirabilis (Tree tumbo), this protein is Photosystem I assembly protein Ycf4.